The chain runs to 224 residues: 7-cyano-7-deazaguanine synthase (224 aa).

8–18 (CSGGLDSTVAA) provides a ligand contact to ATP. Residues cysteine 190, cysteine 198, cysteine 201, and cysteine 204 each coordinate Zn(2+).

This sequence belongs to the QueC family. Zn(2+) is required as a cofactor.

It catalyses the reaction 7-carboxy-7-deazaguanine + NH4(+) + ATP = 7-cyano-7-deazaguanine + ADP + phosphate + H2O + H(+). Its pathway is purine metabolism; 7-cyano-7-deazaguanine biosynthesis. In terms of biological role, catalyzes the ATP-dependent conversion of 7-carboxy-7-deazaguanine (CDG) to 7-cyano-7-deazaguanine (preQ(0)). This chain is 7-cyano-7-deazaguanine synthase, found in Methanothrix thermoacetophila (strain DSM 6194 / JCM 14653 / NBRC 101360 / PT) (Methanosaeta thermophila).